A 483-amino-acid chain; its full sequence is Uridine/cytidine kinase UKL1, chloroplastic (483 aa).

A chloroplast-targeting transit peptide spans Met-1–Asn-47. The tract at residues Pro-59–Gly-264 is uridine kinase. Residues Asn-274–Glu-483 are uracil phosphoribosyltransferase. Residues Lys-298, Arg-307, and Cys-341 to Leu-344 each bind GTP. Arg-351 and Arg-376 together coordinate 5-phospho-alpha-D-ribose 1-diphosphate. Arg-396 is a binding site for GTP. Residues Asp-402, Thr-407 to Ser-410, and Glu-473 each bind 5-phospho-alpha-D-ribose 1-diphosphate. Residue Gly-472–Phe-474 coordinates uracil.

In the N-terminal section; belongs to the uridine kinase family. The protein in the C-terminal section; belongs to the UPRTase family.

The protein resides in the plastid. It is found in the chloroplast. The enzyme catalyses cytidine + ATP = CMP + ADP + H(+). The catalysed reaction is uridine + ATP = UMP + ADP + H(+). The protein operates within pyrimidine metabolism; CTP biosynthesis via salvage pathway; CTP from cytidine: step 1/3. It functions in the pathway pyrimidine metabolism; UMP biosynthesis via salvage pathway; UMP from uridine: step 1/1. Functionally, involved in the pyrimidine salvage pathway. Phosphorylates uridine to uridine monophosphate (UMP). Phosphorylates cytidine to cytidine monophosphate (CMP). Does not possess uracil phosphoribosyltransferase (UPRTase) activity that catalyzes the conversion of uracil and 5-phospho-alpha-D-ribose 1-diphosphate (PRPP) to UMP and diphosphate. In Arabidopsis thaliana (Mouse-ear cress), this protein is Uridine/cytidine kinase UKL1, chloroplastic.